The chain runs to 418 residues: Serine hydroxymethyltransferase (418 aa).

(6S)-5,6,7,8-tetrahydrofolate is bound by residues leucine 121 and 125-127 (GHL). The residue at position 230 (lysine 230) is an N6-(pyridoxal phosphate)lysine. (6S)-5,6,7,8-tetrahydrofolate-binding positions include glutamate 246 and 355-357 (SPF).

It belongs to the SHMT family. In terms of assembly, homodimer. Pyridoxal 5'-phosphate is required as a cofactor.

It is found in the cytoplasm. It carries out the reaction (6R)-5,10-methylene-5,6,7,8-tetrahydrofolate + glycine + H2O = (6S)-5,6,7,8-tetrahydrofolate + L-serine. Its pathway is one-carbon metabolism; tetrahydrofolate interconversion. It participates in amino-acid biosynthesis; glycine biosynthesis; glycine from L-serine: step 1/1. Its function is as follows. Catalyzes the reversible interconversion of serine and glycine with tetrahydrofolate (THF) serving as the one-carbon carrier. This reaction serves as the major source of one-carbon groups required for the biosynthesis of purines, thymidylate, methionine, and other important biomolecules. Also exhibits THF-independent aldolase activity toward beta-hydroxyamino acids, producing glycine and aldehydes, via a retro-aldol mechanism. This is Serine hydroxymethyltransferase from Streptococcus pneumoniae (strain 70585).